Consider the following 347-residue polypeptide: MIDQDRIVDGHASGREDQLDRAVRPKRLAEYIGQPAVREQMEIFIGAARLREEALDHTLVFGPPGLGKTTLANIIATEMGGDLKTTSGPVLDKAGDLAALMTNLEAGDVLFIDEIHRLSPVVEEILYPAMEDFQLDIMIGDGPAARSIKLDLPPFTLVGATTRAGLLTSPLRDRFGIVQRLEFYSVQDLTHIVKRSAQLSGVAMEEAGGMEIARRARGTPRIANRLLRRVRDYAEVKGDGVITAAIADSALNMLNVDHHGFDHMDRRLLLALIEKFGGGPVGVDSLAAAISEERDTIEDVLEPYLIQQGFLVRTPRGRMATQNAYNHFGILAPKHLESQQQDSLPGI.

The segment at 4 to 184 (QDRIVDGHAS…FGIVQRLEFY (181 aa)) is large ATPase domain (RuvB-L). ATP contacts are provided by residues arginine 24, glycine 65, lysine 68, threonine 69, threonine 70, 131–133 (EDF), arginine 174, tyrosine 184, and arginine 221. Threonine 69 is a binding site for Mg(2+). The tract at residues 185–255 (SVQDLTHIVK…IADSALNMLN (71 aa)) is small ATPAse domain (RuvB-S). Residues 258-347 (HHGFDHMDRR…SQQQDSLPGI (90 aa)) are head domain (RuvB-H). Residues arginine 294, arginine 313, and arginine 318 each contribute to the DNA site.

It belongs to the RuvB family. Homohexamer. Forms an RuvA(8)-RuvB(12)-Holliday junction (HJ) complex. HJ DNA is sandwiched between 2 RuvA tetramers; dsDNA enters through RuvA and exits via RuvB. An RuvB hexamer assembles on each DNA strand where it exits the tetramer. Each RuvB hexamer is contacted by two RuvA subunits (via domain III) on 2 adjacent RuvB subunits; this complex drives branch migration. In the full resolvosome a probable DNA-RuvA(4)-RuvB(12)-RuvC(2) complex forms which resolves the HJ.

It is found in the cytoplasm. It carries out the reaction ATP + H2O = ADP + phosphate + H(+). Its function is as follows. The RuvA-RuvB-RuvC complex processes Holliday junction (HJ) DNA during genetic recombination and DNA repair, while the RuvA-RuvB complex plays an important role in the rescue of blocked DNA replication forks via replication fork reversal (RFR). RuvA specifically binds to HJ cruciform DNA, conferring on it an open structure. The RuvB hexamer acts as an ATP-dependent pump, pulling dsDNA into and through the RuvAB complex. RuvB forms 2 homohexamers on either side of HJ DNA bound by 1 or 2 RuvA tetramers; 4 subunits per hexamer contact DNA at a time. Coordinated motions by a converter formed by DNA-disengaged RuvB subunits stimulates ATP hydrolysis and nucleotide exchange. Immobilization of the converter enables RuvB to convert the ATP-contained energy into a lever motion, pulling 2 nucleotides of DNA out of the RuvA tetramer per ATP hydrolyzed, thus driving DNA branch migration. The RuvB motors rotate together with the DNA substrate, which together with the progressing nucleotide cycle form the mechanistic basis for DNA recombination by continuous HJ branch migration. Branch migration allows RuvC to scan DNA until it finds its consensus sequence, where it cleaves and resolves cruciform DNA. In Teredinibacter turnerae (strain ATCC 39867 / T7901), this protein is Holliday junction branch migration complex subunit RuvB.